Consider the following 87-residue polypeptide: Small ribosomal subunit protein bS20 (87 aa).

Positions 1-21 are disordered; it reads MANHKSAEKRARQTIKKTERN.

This sequence belongs to the bacterial ribosomal protein bS20 family.

Functionally, binds directly to 16S ribosomal RNA. This is Small ribosomal subunit protein bS20 from Campylobacter jejuni subsp. jejuni serotype O:23/36 (strain 81-176).